Here is a 147-residue protein sequence, read N- to C-terminus: Phospholipase A2 inhibitor subunit A (147 aa).

Residues E62–F143 form the C-type lectin domain. Disulfide bonds link C64–C141 and C119–C133. A glycan (N-linked (GlcNAc...) asparagine) is linked at N103.

This sequence belongs to the alpha-type phospholipase A2 inhibitor family. Homo- or heterotrimer; homotrimer of PLI-A chains, two PLI-A and one PLI-B chains, one PLI-A and two PLI-B chains, and homotrimer of PLI-B chains (with a ratio of 1:3:3:1). As to expression, expressed by the liver.

Its subcellular location is the secreted. Functionally, PLI binds directly phospholipase A2 in the presence or absence of calcium. Inhibitory activity of the PLI-A homotrimer is more specific than that of the PLI-B homotrimer. This is Phospholipase A2 inhibitor subunit A from Protobothrops flavoviridis (Habu).